Consider the following 436-residue polypeptide: MFDSTLNPLWQRYILAVQEEVKPALGCTEPISLALAAAVAAAELEGPVERVEAWVSPNLMKNGLGVTVPGTGMVGLPIAAALGALGGNANAGLEVLKDATAQAIADAKALLAAGKVSVKIQEPCNEILFSRAKVWNGEKWACVTIVGGHTNIVHIETHDGVVFTQQACVAEGEQESPLTVLSRTTLAEILKFVNEVPFAAIRFILDSAKLNCALSQEGLSGKWGLHIGATLEKQCARGLLAKDLSSSIVIRTSAASDARMGGATLPAMSNSGSGNQGITATMPVVVVAEHFGADDERLARALMLSHLSAIYIHNQLPRLSALCAATTAAMGAAAGMAWLVDGRYETISMAISSMIGDVSGMICDGASNSCAMKVSTSASAAWKAVLMALDDTAVTGNEGIVAHDVEQSIANLCALASHSMQQTDRQIIEIMASKAR.

Belongs to the UPF0597 family.

This Escherichia coli O7:K1 (strain IAI39 / ExPEC) protein is UPF0597 protein YhaM.